The primary structure comprises 86 residues: Anti-adapter protein IraP (86 aa).

Residues 1 to 36 (MKNLIAELLLKLAQKEEESKELCAQVEALEIIVTAM) are a coiled coil.

The protein belongs to the IraP family. As to quaternary structure, interacts with RssB.

It localises to the cytoplasm. Functionally, inhibits RpoS proteolysis by regulating RssB activity, thereby increasing the stability of the sigma stress factor RpoS especially during phosphate starvation, but also in stationary phase and during nitrogen starvation. Its effect on RpoS stability is due to its interaction with RssB, which probably blocks the interaction of RssB with RpoS, and the consequent delivery of the RssB-RpoS complex to the ClpXP protein degradation pathway. The chain is Anti-adapter protein IraP from Shigella boydii serotype 18 (strain CDC 3083-94 / BS512).